The primary structure comprises 83 residues: Large ribosomal subunit protein bL27 (83 aa).

This sequence belongs to the bacterial ribosomal protein bL27 family.

The protein is Large ribosomal subunit protein bL27 of Thermotoga neapolitana (strain ATCC 49049 / DSM 4359 / NBRC 107923 / NS-E).